A 182-amino-acid polypeptide reads, in one-letter code: Alpha-S2-casein (182 aa).

An N-terminal signal peptide occupies residues 1-15; the sequence is MKFFIFTCLLAVALA. A phosphoserine mark is found at Ser22, Ser23, and Ser24.

Belongs to the alpha-casein family. Mammary gland specific. Secreted in milk.

The protein localises to the secreted. Functionally, important role in the capacity of milk to transport calcium phosphate. The sequence is that of Alpha-S2-casein (CSN1S2) from Oryctolagus cuniculus (Rabbit).